The sequence spans 329 residues: MSAPNCARKYDIARLSSLNFQISQYVYLSLISLTFIFSYFAVKIVHQKSIFQLSTKILLFHNLVSANLHQLLYLFSALRRLNLAYFYIDEPCVPLISEADCLPYLKVLVTGISGMIYGQTGLLLERGCATFIKDYDKKTSMFVGIAISIAILFLSLITGKIIIWDDPLQGYLLSCVSYPSQSVERSRLFASIYTFISSFNLVFSVLLRRYNKKLEYSTPFVVGPRFRKREVIDSTSTICFLTFVQFIFMFIYSFGIFTLKTIRSMLTYRQYYFIVVWFYTIPFIAALFPILLVYRIRSSHVSRVTIIKTFTKTKQTQEEHIKQLKNVWN.

7 consecutive transmembrane segments (helical) span residues 25–45, 57–77, 104–124, 143–163, 187–207, 237–257, and 273–293; these read YVYL…VKIV, ILLF…LFSA, YLKV…GLLL, VGIA…KIII, RLFA…SVLL, TICF…FGIF, and FIVV…ILLV.

Belongs to the nematode receptor-like protein sra family.

Its subcellular location is the membrane. The protein is Serpentine receptor class alpha-7 (sra-7) of Caenorhabditis elegans.